The following is a 118-amino-acid chain: Small ribosomal subunit protein eS24 (118 aa).

This sequence belongs to the eukaryotic ribosomal protein eS24 family.

This chain is Small ribosomal subunit protein eS24, found in Sulfolobus acidocaldarius (strain ATCC 33909 / DSM 639 / JCM 8929 / NBRC 15157 / NCIMB 11770).